The chain runs to 157 residues: Transcription elongation factor GreA (157 aa).

Residues 14–37 (LRKELERLLKRRPLITEAIAEARE) are a coiled coil.

Belongs to the GreA/GreB family.

Necessary for efficient RNA polymerase transcription elongation past template-encoded arresting sites. The arresting sites in DNA have the property of trapping a certain fraction of elongating RNA polymerases that pass through, resulting in locked ternary complexes. Cleavage of the nascent transcript by cleavage factors such as GreA or GreB allows the resumption of elongation from the new 3'terminus. GreA releases sequences of 2 to 3 nucleotides. This chain is Transcription elongation factor GreA, found in Vibrio vulnificus (strain CMCP6).